A 308-amino-acid chain; its full sequence is D-alanine--D-alanine ligase (308 aa).

The ATP-grasp domain maps to 102 to 302 (KTVAKSAGIP…FGALLSWMVE (201 aa)). 128-183 (PMEPPYVVKPVAEGSSFGVVIVREGQSHPPQVLGSAEWGYGERVMVERYIPGRELT) is a binding site for ATP. Mg(2+)-binding residues include aspartate 252, glutamate 269, and asparagine 271.

This sequence belongs to the D-alanine--D-alanine ligase family. It depends on Mg(2+) as a cofactor. Mn(2+) serves as cofactor.

The protein resides in the cytoplasm. The enzyme catalyses 2 D-alanine + ATP = D-alanyl-D-alanine + ADP + phosphate + H(+). It participates in cell wall biogenesis; peptidoglycan biosynthesis. Cell wall formation. In Chelativorans sp. (strain BNC1), this protein is D-alanine--D-alanine ligase.